A 426-amino-acid polypeptide reads, in one-letter code: Immunoglobulin mu Fc receptor (426 aa).

Residues 1 to 16 (MNLWLWLLYFLPVSGT) form the signal peptide. In terms of domain architecture, Ig-like spans 24 to 121 (RLEVELGGSV…GKTQKVTLNV (98 aa)). 2 disulfides stabilise this stretch: C37–C103 and C49–C58. At T91 the chain carries Phosphothreonine. The disordered stretch occupies residues 178–212 (KTEAPPVHQPSTNTSVSRHPRVYGASSETPTKPSA). Residues 267-287 (FHILIPTFLGFLLLVLLGLVV) form a helical membrane-spanning segment. Disordered regions lie at residues 306–346 (RRMR…REPD) and 401–426 (DSND…PSRQ). Pro residues predominate over residues 415 to 426 (PSKPPGPRPSRQ).

As to quaternary structure, interacts (via Ig-like domain) with IGHM (via CH4/Cmu4 domain), both secreted and membrane-bound IgM; the interaction is glycan-independent and multivalent theoretically involving up to eight binding sites for the IgM pentamer. Post-translationally, phosphorylated on both Tyr and Ser residues. In terms of processing, O-glycosylated. Sialylated. O-linked glycans regulate trafficking to the plasma membrane.

The protein resides in the cell membrane. It is found in the early endosome membrane. It localises to the golgi apparatus. Its subcellular location is the trans-Golgi network membrane. The protein localises to the lysosome membrane. In terms of biological role, high-affinity Fc receptor for immunoglobulin M (IgM), both secreted and membrane-bound IgM. Primarily regulates IgM transport and homeostasis. In lymphoid cells, enables exocytosis of membrane-bound IgM on the plasma membrane as well as endocytosis of IgM-antigen complexes toward lysosomes for degradation. In mucosal epithelium, mediates retrotranscytosis of antigen-IgM complexes across mucosal M cells toward antigen-presenting cells in mucosal lymphoid tissues. Triggers costimulatory signaling and mediates most of IgM effector functions involved in B cell development and primary immune response to infection. Likely limits tonic IgM BCR signaling to self-antigens for proper negative selection of autoreactive B cells in the bone marrow and for the maintenance of regulatory B cell pool in peripheral lymphoid organs. Mediates antibody responses to T cell-dependent and T cell-independent antigens and promotes induction of an efficient neutralizing IgG response. Engages in cross-talk with antigen-receptor signaling via the non-canonical NF-kappa-B, MAP kinases and calcium signaling pathways. This is Immunoglobulin mu Fc receptor from Rattus norvegicus (Rat).